A 475-amino-acid chain; its full sequence is Mitochondrial adenyl nucleotide antiporter SLC25A24 (475 aa).

Residues 1-173 form a regulatory N-terminal domain region; it reads MLRWLRGFVL…RFWKHSTGID (173 aa). The Mitochondrial intermembrane segment spans residues 1-197; the sequence is MLRWLRGFVL…ERKSGQWWRQ (197 aa). EF-hand domains are found at residues 19 to 54, 55 to 88, 86 to 121, and 122 to 157; these read EPPTRYETLFQALDRNGDGVVDIRELQEGLKSLGIP, LGQDAEEKIFTTGDVNKDGKLDFEEFMKYLKDHE, DHEKKMKLAFKSLDKNNDGKIEASEIVQSLQTLGLT, and ISEQQAELILQSIDADGTMTVDWNEWRDYFLFNPVA. The Ca(2+) site is built by Asp32, Asn34, Asp36, Val38, Glu43, Asp68, Asn70, Asp72, Lys74, Glu79, Asp99, Asn101, Asp103, Lys105, Glu110, Asp135, Asp137, Thr139, Thr141, and Glu146. Residues 159–168 form a linker region region; it reads IEEIIRFWKH. Residues 174 to 475 are C-terminal transmembrane transporter domain; the sequence is IGDSLTIPDE…MKQTLGVTQK (302 aa). 3 Solcar repeats span residues 192–276, 284–369, and 381–469; these read GQWW…YKKL, IGTF…LKSH, and PGVL…MKQT. A helical transmembrane segment spans residues 198-215; the sequence is LLAGGIAGAVSRTSTAPL. At 216–250 the chain is on the mitochondrial matrix side; it reads DRLKVMMQVHGSKSMNIFGGFRQMIKEGGVRSLWR. Residues 251 to 270 form a helical membrane-spanning segment; the sequence is GNGTNVIKIAPETAVKFWVY. The Mitochondrial intermembrane portion of the chain corresponds to 271–293; that stretch reads EQYKKLLTEEGQKIGTFERFISG. Residues 294–307 form a helical membrane-spanning segment; the sequence is SMAGATAQTFIYPM. The Mitochondrial matrix segment spans residues 308–343; it reads EVMKTRLAVGKTGQYSGIYDCAKKILKYEGFGAFYK. Residue Lys318 is modified to N6-acetyllysine; alternate. Lys318 carries the N6-succinyllysine; alternate modification. Lys334 is subject to N6-acetyllysine. A helical membrane pass occupies residues 344-363; that stretch reads GYVPNLLGIIPYAGIDLAVY. Residues 364–386 lie on the Mitochondrial intermembrane side of the membrane; it reads ELLKSHWLDNFAKDSVNPGVLVL. A helical membrane pass occupies residues 387-404; the sequence is LGCGALSSTCGQLASYPL. Residues 405–443 are Mitochondrial matrix-facing; the sequence is ALVRTRMQAQAMLEGAPQLNMVGLFRRIISKEGLPGLYR. Lys435 is subject to N6-acetyllysine; alternate. An N6-succinyllysine; alternate modification is found at Lys435. Residues 444-463 form a helical membrane-spanning segment; sequence GITPNFMKVLPAVGISYVVY. Residues 464–475 lie on the Mitochondrial intermembrane side of the membrane; that stretch reads ENMKQTLGVTQK.

Belongs to the mitochondrial carrier (TC 2.A.29) family. Monomer. As to expression, mainly expressed in colon. Also expressed in the small intestine proximal to the ileum. Weakly expressed in kidney but not in the liver.

Its subcellular location is the mitochondrion inner membrane. The protein resides in the peroxisome membrane. It catalyses the reaction Mg(2+)(out) + phosphate(in) + ATP(out) = Mg(2+)(in) + phosphate(out) + ATP(in). The enzyme catalyses ADP(out) + phosphate(in) + H(+)(out) = ADP(in) + phosphate(out) + H(+)(in). It carries out the reaction AMP(out) + phosphate(in) = AMP(in) + phosphate(out). The catalysed reaction is phosphate(in) + ATP(out) + 2 H(+)(out) = phosphate(out) + ATP(in) + 2 H(+)(in). It catalyses the reaction dADP(in) + ADP(out) = dADP(out) + ADP(in). The enzyme catalyses Mg(2+)(in) + ADP(out) + ATP(in) + H(+)(out) = Mg(2+)(out) + ADP(in) + ATP(out) + H(+)(in). It carries out the reaction ADP(out) + diphosphate(in) = ADP(in) + diphosphate(out). The catalysed reaction is dAMP(in) + ADP(out) + H(+)(out) = dAMP(out) + ADP(in) + H(+)(in). It catalyses the reaction 3'-AMP(in) + ADP(out) + H(+)(out) = 3'-AMP(out) + ADP(in) + H(+)(in). The enzyme catalyses dAMP(out) + phosphate(in) = dAMP(in) + phosphate(out). It carries out the reaction 3'-AMP(out) + phosphate(in) = 3'-AMP(in) + phosphate(out). The catalysed reaction is dADP(out) + phosphate(in) + H(+)(out) = dADP(in) + phosphate(out) + H(+)(in). With respect to regulation, activated by an increase in cytosolic calcium levels that induce a conformational change of the N-terminal regulatory domain, uncapping the channel and allowing transport. Inhibited by bathophenanthroline, mersalyl, p-hydroxymercuribenzoate, bromcresol purple and tannic acid. Its function is as follows. Electroneutral antiporter that mediates the transport of adenyl nucleotides through the inner mitochondrial membrane. Originally identified as an ATP-magnesium/inorganic phosphate antiporter, it also acts as a broad specificity adenyl nucleotide antiporter. By regulating the mitochondrial matrix adenyl nucleotide pool could adapt to changing cellular energetic demands and indirectly regulate adenyl nucleotide-dependent metabolic pathways. In vitro, a low activity is also observed with guanyl and pyrimidine nucleotides. May play a role in protecting cells against oxidative stress-induced cell death, by buffering calcium levels in the mitochondrial matrix through the formation of calcium-phosphate precipitates. This is Mitochondrial adenyl nucleotide antiporter SLC25A24 (SLC25A24) from Oryctolagus cuniculus (Rabbit).